The following is a 376-amino-acid chain: DNA repair protein RAD51 homolog 3 (376 aa).

The required for Holliday junction resolution activity stretch occupies residues 1–126; sequence MRGKTFRFEM…LMKTTEICGA (126 aa). A Phosphoserine modification is found at Ser20. Residues 79 to 136 form an interaction with RAD51B, RAD51D and XRCC3 region; that stretch reads SESHKKCTALELLEQEHTQGFIITFCSALDDILGGGVPLMKTTEICGAPGVGKTQLCM. 125 to 132 lines the ATP pocket; it reads GAPGVGKT. The Nuclear localization signal signature appears at 366 to 370; the sequence is RKRSR.

This sequence belongs to the RecA family. RAD51 subfamily. In terms of assembly, part of the RAD51 paralog protein complexes BCDX2 and CX3; the complexes have a ring-like structure arranged into a flat disc around a central channel. The BCDX2 complex consits of RAD51B, RAD51C, RAD51D and XRCC2; the CX3 complex consists of RAD51C and XRCC3. The BCDX2 subcomplex RAD51B:RAD51C interacts with RAD51. Interacts with SWSAP1; involved in homologous recombination repair. Interacts directly with PALB2 which may serve as a scaffold for a HR complex containing PALB2, BRCA2, RAD51C, RAD51 and XRCC3. Interacts with HELQ. Interacts with DNA damage up-regulated protein DDUP. Expressed in a variety of tissues, with highest expression in testis, heart muscle, spleen and prostate.

The protein resides in the nucleus. It localises to the cytoplasm. The protein localises to the perinuclear region. Its subcellular location is the mitochondrion. In terms of biological role, essential for the homologous recombination (HR) pathway of DNA repair. Involved in the homologous recombination repair (HRR) pathway of double-stranded DNA breaks arising during DNA replication or induced by DNA-damaging agents. Part of the RAD51 paralog protein complexes BCDX2 and CX3 which act at different stages of the BRCA1-BRCA2-dependent HR pathway. Upon DNA damage, BCDX2 seems to act downstream of BRCA2 recruitment and upstream of RAD51 recruitment; CX3 seems to act downstream of RAD51 recruitment; both complexes bind predominantly to the intersection of the four duplex arms of the Holliday junction (HJ) and to junction of replication forks. The BCDX2 complex was originally reported to bind single-stranded DNA, single-stranded gaps in duplex DNA and specifically to nicks in duplex DNA. The BCDX2 subcomplex RAD51B:RAD51C exhibits single-stranded DNA-dependent ATPase activity suggesting an involvement in early stages of the HR pathway. Involved in RAD51 foci formation in response to DNA damage suggesting an involvement in early stages of HR probably in the invasion step. Has an early function in DNA repair in facilitating phosphorylation of the checkpoint kinase CHEK2 and thereby transduction of the damage signal, leading to cell cycle arrest and HR activation. Participates in branch migration and HJ resolution and thus is important for processing HR intermediates late in the DNA repair process; the function may be linked to the CX3 complex. Part of a PALB2-scaffolded HR complex containing BRCA2 and which is thought to play a role in DNA repair by HR. Protects RAD51 from ubiquitin-mediated degradation that is enhanced following DNA damage. Plays a role in regulating mitochondrial DNA copy number under conditions of oxidative stress in the presence of RAD51 and XRCC3. Contributes to DNA cross-link resistance, sister chromatid cohesion and genomic stability. Involved in maintaining centrosome number in mitosis. The protein is DNA repair protein RAD51 homolog 3 (RAD51C) of Homo sapiens (Human).